Consider the following 441-residue polypeptide: Signal recognition particle 54 kDa protein (441 aa).

Residues G104–T111, D186–R190, and T244–D247 contribute to the GTP site.

This sequence belongs to the GTP-binding SRP family. SRP54 subfamily. Part of the signal recognition particle protein translocation system, which is composed of SRP and FtsY. Archaeal SRP consists of a 7S RNA molecule of 300 nucleotides and two protein subunits: SRP54 and SRP19.

Its subcellular location is the cytoplasm. It carries out the reaction GTP + H2O = GDP + phosphate + H(+). Its function is as follows. Involved in targeting and insertion of nascent membrane proteins into the cytoplasmic membrane. Binds to the hydrophobic signal sequence of the ribosome-nascent chain (RNC) as it emerges from the ribosomes. The SRP-RNC complex is then targeted to the cytoplasmic membrane where it interacts with the SRP receptor FtsY. This Staphylothermus marinus (strain ATCC 43588 / DSM 3639 / JCM 9404 / F1) protein is Signal recognition particle 54 kDa protein.